The sequence spans 147 residues: MYFAIRLSFVLAVLICLTGNGSARMLDADRNRLQQLQIRSQQSADANTQVDIAYEVIGIYDKYKGQGGSNVLREAQLNSQVNDFKRKTMVIDGVPAQGGVWGILGAIKKAADAVPDNVKKDAENLVKSSTKVLVRGIYDYLMGKMKH.

Positions 1 to 23 (MYFAIRLSFVLAVLICLTGNGSA) are cleaved as a signal peptide.

It belongs to the Turandot family.

It localises to the secreted. In terms of biological role, a humoral factor that may play a role in stress tolerance. This Drosophila melanogaster (Fruit fly) protein is Protein Turandot Z.